We begin with the raw amino-acid sequence, 523 residues long: Tyrosine/DOPA decarboxylase 5 (523 aa).

The segment covering 1-19 has biased composition (polar residues); sequence MGSLPTDNLESMSICSQNP. Disordered stretches follow at residues 1–20 and 47–66; these read MGSLPTDNLESMSICSQNPL and SRSQANPGSQQTLPETAPNH. Lysine 321 is subject to N6-(pyridoxal phosphate)lysine.

This sequence belongs to the group II decarboxylase family. As to quaternary structure, homodimer. Requires pyridoxal 5'-phosphate as cofactor. As to expression, roots.

The enzyme catalyses L-tyrosine + H(+) = tyramine + CO2. It catalyses the reaction L-dopa + H(+) = dopamine + CO2. It carries out the reaction 5-hydroxy-L-tryptophan + H(+) = serotonin + CO2. In terms of biological role, may play an important role in providing precursors for alkaloid synthesis in the roots and germinating seedlings. The sequence is that of Tyrosine/DOPA decarboxylase 5 (TYDC5) from Papaver somniferum (Opium poppy).